Here is a 194-residue protein sequence, read N- to C-terminus: Putative manganese efflux pump MntP (194 aa).

The next 6 helical transmembrane spans lie at 8–28 (LLAI…GIIL), 36–56 (MLIM…LGWL), 61–81 (FSHL…AFLG), 109–129 (MAVA…FLGI), 138–158 (PAGI…IFGI), and 172–192 (LWGG…HLFF).

Belongs to the MntP (TC 9.B.29) family.

The protein localises to the cell inner membrane. Functionally, probably functions as a manganese efflux pump. The sequence is that of Putative manganese efflux pump MntP from Bacteroides fragilis (strain ATCC 25285 / DSM 2151 / CCUG 4856 / JCM 11019 / LMG 10263 / NCTC 9343 / Onslow / VPI 2553 / EN-2).